Here is a 420-residue protein sequence, read N- to C-terminus: Glucose-1-phosphate adenylyltransferase (420 aa).

Alpha-D-glucose 1-phosphate contacts are provided by residues tyrosine 107, glycine 172, 187-188 (EK), and serine 205.

Belongs to the bacterial/plant glucose-1-phosphate adenylyltransferase family. In terms of assembly, homotetramer.

The catalysed reaction is alpha-D-glucose 1-phosphate + ATP + H(+) = ADP-alpha-D-glucose + diphosphate. It participates in glycan biosynthesis; glycogen biosynthesis. Its function is as follows. Involved in the biosynthesis of ADP-glucose, a building block required for the elongation reactions to produce glycogen. Catalyzes the reaction between ATP and alpha-D-glucose 1-phosphate (G1P) to produce pyrophosphate and ADP-Glc. This chain is Glucose-1-phosphate adenylyltransferase, found in Rhizobium leguminosarum bv. trifolii (strain WSM2304).